The sequence spans 406 residues: Phosphorylase b kinase gamma catalytic chain, liver/testis isoform (406 aa).

The 268-residue stretch at 24–291 (YDPKDVIGRG…AEQALQHPFF (268 aa)) folds into the Protein kinase domain. Residues 30 to 38 (IGRGVSSVV) and K53 each bind ATP. The active-site Proton acceptor is D153. The calmodulin-binding (domain-N) stretch occupies residues 306-330 (QRFRVAVWTVLAAGRVALSTHRVRP). The residue at position 345 (S345) is a Phosphoserine. A calmodulin-binding (domain-C) region spans residues 346 to 370 (VRHLIDNCAFRLYGHWVKKGEQQNR).

The protein belongs to the protein kinase superfamily. CAMK Ser/Thr protein kinase family. Hexadecamer of 4 heterotetramers, each composed of alpha, beta, gamma, and delta subunits. Alpha (PHKA1 or PHKA2) and beta (PHKB) are regulatory subunits, gamma (PHKG1 or PHKG2) is the catalytic subunit, and delta is calmodulin.

The catalysed reaction is 2 ATP + phosphorylase b = 2 ADP + phosphorylase a.. In terms of biological role, catalytic subunit of the phosphorylase b kinase (PHK), which mediates the neural and hormonal regulation of glycogen breakdown (glycogenolysis) by phosphorylating and thereby activating glycogen phosphorylase. May regulate glycogeneolysis in the testis. In vitro, phosphorylates PYGM. The sequence is that of Phosphorylase b kinase gamma catalytic chain, liver/testis isoform (PHKG2) from Homo sapiens (Human).